A 337-amino-acid chain; its full sequence is Hsp90 co-chaperone Cdc37-like 1 (337 aa).

Residues 1–11 (MEQPWPPPGPW) are compositionally biased toward pro residues. The interval 1 to 40 (MEQPWPPPGPWSLPRAEGEAEEESDFDVFPSSPRCPQLPG) is disordered. The self-association stretch occupies residues 2 to 171 (EQPWPPPGPW…YEQKIRHFGM (170 aa)). Phosphoserine is present on residues serine 32 and serine 88. Positions 84-122 (HNSESLDQEHAKAQTAVSELRQREEEWRQKEEALVQREK) form a coiled coil. Positions 147–277 (KDTEDEDKSE…SRVRLYSQSQ (131 aa)) are self-association and interaction with Hsp90. The interval 267–337 (KSRVRLYSQS…DDEPKMMDTV (71 aa)) is interaction with Hsp70. A required for interaction with STIP1 region spans residues 278 to 337 (SFQPMTVQNHVPHSGVGSIGLLESLPQNPDYLQYSISTALCSLNSVVHKEDDEPKMMDTV).

Belongs to the CDC37 family. In terms of assembly, self-associates. Forms complexes with Hsp70 and Hsp90. Interacts with CDC37, FKBP4, PPID and STIP1. In terms of tissue distribution, expressed in brain, heart, kidney, liver, placenta and skeletal muscle.

It localises to the cytoplasm. Its function is as follows. Co-chaperone that binds to numerous proteins and promotes their interaction with Hsp70 and Hsp90. The protein is Hsp90 co-chaperone Cdc37-like 1 (CDC37L1) of Homo sapiens (Human).